The following is a 125-amino-acid chain: Glutaredoxin-C1 (125 aa).

The region spanning 19 to 119 (VNKAKEIVSA…PLLTEAGAIA (101 aa)) is the Glutaredoxin domain. A disulfide bond links Cys-39 and Cys-42.

It belongs to the glutaredoxin family. CPYC subfamily.

The protein localises to the cytoplasm. Has a glutathione-disulfide oxidoreductase activity in the presence of NADPH and glutathione reductase. Reduces low molecular weight disulfides and proteins. This Arabidopsis thaliana (Mouse-ear cress) protein is Glutaredoxin-C1 (GRXC1).